Here is a 632-residue protein sequence, read N- to C-terminus: Pentatricopeptide repeat-containing protein ELI1, chloroplastic (632 aa).

The transit peptide at 1-19 (MASSPLLATSLPQNQLSTT) directs the protein to the chloroplast. PPR repeat units follow at residues 94–128 (DLFL…EINP), 129–159 (NEFT…GLGI), 160–194 (DPYV…SLVS), 196–221 (TAMI…MCER), 222–256 (DIVS…GKPK), 258–292 (DEIT…RIRL), 293–323 (NVKV…TPRK), 324–354 (DIVA…MQGI), 360–395 (TDIT…GIKP), and 396–426 (KIEH…MNMD). The interval 431–506 (LWSSVLGSCK…EPGISTIEIE (76 aa)) is type E motif. The tract at residues 497–512 (EPGISTIEIENKVHEF) is required for function in RNA editing. The segment at 507 to 537 (NKVHEFRAGDREHSKSKEIYTMLRKISERIK) is type E(+) motif. Residues 538–632 (SHGYVPNTNT…DGSCSCGDFW (95 aa)) are type DYW motif.

Belongs to the PPR family. PCMP-H subfamily. Requires Zn(2+) as cofactor.

It is found in the plastid. It localises to the chloroplast. Functionally, plays a major role in single RNA editing events in chloroplasts. Acts as a site-recognition transacting factor involved in the edition of the site 5 of ndhB1 and ndhB2 (ndhB1-5 and ndhB2-5 sites corresponding to cytidine-830), which are plastid-encoded subunits of the NADH-plastoquinone oxidoreductase. May provide the catalytic activity for editing site conversion. This Arabidopsis thaliana (Mouse-ear cress) protein is Pentatricopeptide repeat-containing protein ELI1, chloroplastic.